The sequence spans 432 residues: Phytase AppA (432 aa).

A signal peptide spans methionine 1–alanine 22. A 1D-myo-inositol hexakisphosphate-binding site is contributed by arginine 38. The Nucleophile role is filled by histidine 39. 1D-myo-inositol hexakisphosphate contacts are provided by residues arginine 42–lysine 46 and arginine 114. Cystine bridges form between cysteine 99/cysteine 130, cysteine 155/cysteine 430, cysteine 200/cysteine 210, and cysteine 404/cysteine 413. 1D-myo-inositol hexakisphosphate is bound by residues arginine 289 and histidine 325–threonine 327. The active-site Proton donor is aspartate 326.

The protein belongs to the histidine acid phosphatase family. Monomer.

It is found in the periplasm. It catalyses the reaction 1D-myo-inositol hexakisphosphate + H2O = 1D-myo-inositol 1,2,3,4,5-pentakisphosphate + phosphate. The enzyme catalyses 1D-myo-inositol 1,2,3,4,5-pentakisphosphate + H2O = 1D-myo-inositol 2,3,4,5-tetrakisphosphate + phosphate. The catalysed reaction is 1D-myo-inositol 2,3,4,5-tetrakisphosphate + H2O = 1D-myo-inositol 2,4,5-triphosphate + phosphate. It carries out the reaction 1D-myo-inositol 2,4,5-triphosphate + H2O = 1D-myo-inositol 2,5-bisphosphate + phosphate. It catalyses the reaction 1D-myo-inositol 2,5-bisphosphate + H2O = 1D-myo-inositol 2-phosphate + phosphate. The enzyme catalyses GTP + H2O = GDP + phosphate + H(+). Its activity is regulated as follows. Contains three consecutive and one non-consecutive disulfide bonds and shows a strong dependence on DsbC for its full activity. Competitively inhibited by tartaric acid and by sodium fluorid. Its function is as follows. Catalyzes the hydrolysis of phytate (or myo-inositol hexakisphosphate, an indigestible organic form of phosphorus that is found in many plant tissues) to myo-inositol and inorganic phosphate. Dephosphorylates phytate in a stereospecific way by sequential removal of phosphate groups to produce myo-inositol 2-monophosphate. Also shows phosphoanhydride phosphatase activity and hydrolyzes the distal phosphoryl residues of GTP, the 5'-beta-phosphoryl residue of the regulatory nucleotide ppGpp and tripolyphosphates. Does not split most phosphomonoesters with the exception of the synthetic substrate p-nitrophenyl phosphate (pNPP), 2,3-bisphosphoglycerate and fructose 1,6-bisphosphate. This Escherichia coli (strain K12) protein is Phytase AppA.